An 896-amino-acid polypeptide reads, in one-letter code: DNA double-strand break repair Rad50 ATPase (896 aa).

Residues 32–38 (NGAGKSS) and Q137 contribute to the ATP site. Coiled coils occupy residues 200–274 (RRYQ…KLQE), 412–505 (EEIR…LISM), 580–611 (IGDIEALRKQKDEVSKKLKDAEDRTHEIESEF), 636–669 (IKLAEDLKRQRETLREKVKDLRSRSAGMDEIQKR), and 702–731 (RSKVETLRSHVSEIEQRISDRERDIERMKK). The Zinc-hook domain occupies 411–507 (YEEIRRDIDE…KKRQLISMES (97 aa)). Zn(2+) contacts are provided by C455 and C458.

This sequence belongs to the SMC family. RAD50 subfamily. As to quaternary structure, homodimer. Forms a heterotetramer composed of two Mre11 subunits and two Rad50 subunits. Requires Zn(2+) as cofactor.

Its function is as follows. Part of the Rad50/Mre11 complex, which is involved in the early steps of DNA double-strand break (DSB) repair. The complex may facilitate opening of the processed DNA ends to aid in the recruitment of HerA and NurA. Rad50 controls the balance between DNA end bridging and DNA resection via ATP-dependent structural rearrangements of the Rad50/Mre11 complex. This chain is DNA double-strand break repair Rad50 ATPase, found in Thermoplasma acidophilum (strain ATCC 25905 / DSM 1728 / JCM 9062 / NBRC 15155 / AMRC-C165).